The following is a 314-amino-acid chain: tRNA dimethylallyltransferase (314 aa).

Residue 13 to 20 participates in ATP binding; it reads GPTAIGKT. 15–20 lines the substrate pocket; it reads TAIGKT. Positions 38–41 are interaction with substrate tRNA; the sequence is DSMQ.

This sequence belongs to the IPP transferase family. Monomer. It depends on Mg(2+) as a cofactor.

It carries out the reaction adenosine(37) in tRNA + dimethylallyl diphosphate = N(6)-dimethylallyladenosine(37) in tRNA + diphosphate. Its function is as follows. Catalyzes the transfer of a dimethylallyl group onto the adenine at position 37 in tRNAs that read codons beginning with uridine, leading to the formation of N6-(dimethylallyl)adenosine (i(6)A). This chain is tRNA dimethylallyltransferase, found in Desulfotalea psychrophila (strain LSv54 / DSM 12343).